The chain runs to 230 residues: Mitochondrial intermembrane space import and assembly protein 40 (230 aa).

The transit peptide at 1 to 18 directs the protein to the mitochondrion; the sequence is MFARSFSNASRTIARRSL. Residues 1–22 show a composition bias toward polar residues; it reads MFARSFSNASRTIARRSLSTRS. Positions 1-30 are disordered; the sequence is MFARSFSNASRTIARRSLSTRSGPAPSSLW. The Mitochondrial matrix portion of the chain corresponds to 19 to 34; that stretch reads STRSGPAPSSLWSSRN. Residues 35–51 traverse the membrane as a helical; Signal-anchor for type II membrane protein segment; it reads AVIAGTTLAITALAVTS. The Mitochondrial intermembrane portion of the chain corresponds to 52-230; it reads ERRKVFNESA…EETAAPAAAP (179 aa). The disordered stretch occupies residues 58–111; the sequence is NESAQKATSPRDSIIAQDSLKENVHKKSVRQDEFSGESTKPEASTSSDSVEKAA. The segment covering 59 to 68 has biased composition (polar residues); that stretch reads ESAQKATSPR. Residues 76–90 are compositionally biased toward basic and acidic residues; the sequence is SLKENVHKKSVRQDE. Residues 93-105 show a composition bias toward polar residues; the sequence is GESTKPEASTSSD. Cystine bridges form between Cys144-Cys146, Cys155-Cys188, and Cys165-Cys178. One can recognise a CHCH domain in the interval 152 to 196; that stretch reads TGPCGEQFKAAFSCFVYSEAEPKGVDCVELFKVMQDCFREHPEIY. Short sequence motifs (cx9C motif) lie at residues 155 to 165 and 178 to 188; these read CGEQFKAAFSC and CVELFKVMQDC. A disordered region spans residues 195–230; that stretch reads IYGEEIDDDEAPAQEGTMEEKVEAAKEETAAPAAAP. The segment covering 196–206 has biased composition (acidic residues); sequence YGEEIDDDEAP. Residues 212–223 are compositionally biased toward basic and acidic residues; the sequence is MEEKVEAAKEET.

Monomer. Cu(2+) serves as cofactor. The cofactor is Zn(2+).

The protein localises to the mitochondrion inner membrane. Functionally, required for the import and folding of small cysteine-containing proteins (small Tim) in the mitochondrial intermembrane space (IMS). Forms a redox cycle with ERV1 that involves a disulfide relay system. Precursor proteins to be imported into the IMS are translocated in their reduced form into the mitochondria. The oxidized form of MIA40 forms a transient intermolecular disulfide bridge with the reduced precursor protein, resulting in oxidation of the precursor protein that now contains an intramolecular disulfide bond and is able to undergo folding in the IMS. In Cryptococcus neoformans var. neoformans serotype D (strain JEC21 / ATCC MYA-565) (Filobasidiella neoformans), this protein is Mitochondrial intermembrane space import and assembly protein 40 (MIA40).